The primary structure comprises 381 residues: MEVISTNTNGSTIFKNGAIPMNGYQNGTSKHQNGHQNGTSEHRNGHQNGISEHQNGHQNGTSEHQNGHQNGTISHDNGNELQLLGSSNSIKPGWFSEFSALWPGEAFSLKVEKLLFQGKSDYQDVMLFESATYGKVLTLDGAIQHTENGGFPYTEMIVHLPLGSIPNPKKVLIIGGGIGFTLFEMLRYPTIEKIDIVEIDDVVVDVSRKFFPYLAANFSDPRVTLVLGDGAAFVKAAQAGYYDAIIVDSSDPIGPAKDLFERPFFEAVAKALRPGGVVCTQAESIWLHMHIIKQIIANCRQVFKGSVNYAWTTVPTYPTGVIGYMLCSTEGPEVDFKNPVNPIDKETTQVKSKLAPLKFYNSDIHKAAFILPSFARSMIES.

Residues 21–81 (MNGYQNGTSK…TISHDNGNEL (61 aa)) form a disordered region. 2 stretches are compositionally biased toward polar residues: residues 23-39 (GYQN…QNGT) and 46-81 (HQNG…GNEL). Positions 92–329 (PGWFSEFSAL…GVIGYMLCST (238 aa)) constitute a PABS domain. Residues Gln123, Glu198, and 229 to 230 (DG) contribute to the S-adenosyl-L-methionine site. The active-site Proton acceptor is Asp248. Tyr317 provides a ligand contact to S-adenosyl-L-methionine.

The protein belongs to the class I-like SAM-binding methyltransferase superfamily. Putrescine methyltransferase family. Predominantly expressed in roots.

It carries out the reaction putrescine + S-adenosyl-L-methionine = N-methylputrescine + S-adenosyl-L-homocysteine + H(+). Its pathway is alkaloid biosynthesis; nicotine biosynthesis. Functionally, involved in the biosynthesis of pyridine alkaloid natural products, leading mainly to the production of anabasine, anatabine, nicotine and nornicotine, effective deterrents against herbivores with antiparasitic and pesticide properties (neurotoxins); nornicotine serves as the precursor in the synthesis of the carcinogen compound N'-nitrosonornicotine (NNN). Methyltransferase that mediates the conversion of putrescine to N-methylputrescine. Promotes leaves ripening. The chain is Putrescine N-methyltransferase 3 from Nicotiana tabacum (Common tobacco).